We begin with the raw amino-acid sequence, 289 residues long: ATP synthase gamma chain (289 aa).

Belongs to the ATPase gamma chain family. As to quaternary structure, F-type ATPases have 2 components, CF(1) - the catalytic core - and CF(0) - the membrane proton channel. CF(1) has five subunits: alpha(3), beta(3), gamma(1), delta(1), epsilon(1). CF(0) has three main subunits: a, b and c.

The protein resides in the cell inner membrane. In terms of biological role, produces ATP from ADP in the presence of a proton gradient across the membrane. The gamma chain is believed to be important in regulating ATPase activity and the flow of protons through the CF(0) complex. This Acinetobacter baylyi (strain ATCC 33305 / BD413 / ADP1) protein is ATP synthase gamma chain.